We begin with the raw amino-acid sequence, 542 residues long: CTP synthase (542 aa).

The tract at residues 1–265 (MARYVFITGG…DDEVLAAFGI (265 aa)) is amidoligase domain. Position 13 (S13) interacts with CTP. Residue S13 participates in UTP binding. Residues 14-19 (SLGKGI) and D71 each bind ATP. D71 and E139 together coordinate Mg(2+). CTP contacts are provided by residues 146-148 (DIE), 186-191 (KTKPTQ), and K222. Residues 186-191 (KTKPTQ) and K222 each bind UTP. The Glutamine amidotransferase type-1 domain maps to 291–541 (TIAIVGKYTG…IEAATEQSRL (251 aa)). G353 is a binding site for L-glutamine. C380 serves as the catalytic Nucleophile; for glutamine hydrolysis. L-glutamine contacts are provided by residues 381 to 384 (FGMQ), E404, and R469. Active-site residues include H514 and E516.

It belongs to the CTP synthase family. Homotetramer.

It catalyses the reaction UTP + L-glutamine + ATP + H2O = CTP + L-glutamate + ADP + phosphate + 2 H(+). The catalysed reaction is L-glutamine + H2O = L-glutamate + NH4(+). It carries out the reaction UTP + NH4(+) + ATP = CTP + ADP + phosphate + 2 H(+). The protein operates within pyrimidine metabolism; CTP biosynthesis via de novo pathway; CTP from UDP: step 2/2. Allosterically activated by GTP, when glutamine is the substrate; GTP has no effect on the reaction when ammonia is the substrate. The allosteric effector GTP functions by stabilizing the protein conformation that binds the tetrahedral intermediate(s) formed during glutamine hydrolysis. Inhibited by the product CTP, via allosteric rather than competitive inhibition. Functionally, catalyzes the ATP-dependent amination of UTP to CTP with either L-glutamine or ammonia as the source of nitrogen. Regulates intracellular CTP levels through interactions with the four ribonucleotide triphosphates. The polypeptide is CTP synthase (Rhizobium etli (strain CIAT 652)).